Reading from the N-terminus, the 465-residue chain is MPKKVKPTGDENEEESVPCKQVKEELPNTLSVLNFDSPSSFFESLISPIKVETFFKEFWEQKPLLIQRDDPSLAAYYQSLFSLSDLRSLCSQGLYYGRDVNVCRCIGGKKKVLNKDGKAQFLQLRKDFDQKRATIQFHQPQRFKDELWRIQEKLECYFGSLVGSNVYMTPAGSQGLPPHYDDVEVFILQLEGRKRWRLYSPTVPLAREYSVEPEDRIGTPTHDFLLKPGDLLYFPRGTIHQAETPSGLAHSIHLTISTYQNNSWGDYLLDSISGLVFDIAKEDVALRTGMPRRMLMNVETPADVTRKLSGFLRTLADQLEGRKELLSSDMKKDFVMHRLPPFCVGNGTESMNPGGKLPRLNSIVRLQFKDHIVLTVGPDQNQSDEAQQKVVYIYHSLKNERQTHMMGKEVETEIYGLRFPLSYVDALKQIWCGSPVRVKDLKLGTDEEKENLAVSLWTECLVHVL.

Positions 139–271 (QPQRFKDELW…NSWGDYLLDS (133 aa)) constitute a JmjC domain. Fe cation-binding residues include H179, D181, and H240. At S309 the chain carries Phosphoserine.

It belongs to the ROX family. MINA53 subfamily. Requires Fe(2+) as cofactor.

The protein localises to the nucleus. The protein resides in the nucleolus. It carries out the reaction L-histidyl-[ribosomal protein uL15] + 2-oxoglutarate + O2 = (3S)-3-hydroxy-L-histidyl-[ribosomal protein uL15] + succinate + CO2. The enzyme catalyses L-histidyl-[protein] + 2-oxoglutarate + O2 = (3S)-3-hydroxy-L-histidyl-[protein] + succinate + CO2. Its function is as follows. Oxygenase that can act as both a histone lysine demethylase and a ribosomal histidine hydroxylase. Is involved in the demethylation of trimethylated 'Lys-9' on histone H3 (H3K9me3), leading to an increase in ribosomal RNA expression. Also catalyzes the hydroxylation of 60S ribosomal protein L27a on 'His-39'. May play an important role in cell growth and survival. May be involved in ribosome biogenesis, most likely during the assembly process of pre-ribosomal particles. The polypeptide is Ribosomal oxygenase 2 (Rattus norvegicus (Rat)).